The chain runs to 256 residues: Protein crossbronx-like (256 aa).

The UBC core domain maps to 17-179 (NQGYKVLAEY…AKVSILWSCQ (163 aa)).

This sequence belongs to the ubiquitin-conjugating enzyme family. FTS subfamily.

The protein is Protein crossbronx-like of Drosophila virilis (Fruit fly).